Reading from the N-terminus, the 25-residue chain is Dermaseptin-5.1TR (25 aa).

Residue valine 25 is modified to Valine amide.

In terms of tissue distribution, expressed by the skin glands.

It localises to the secreted. Has antimicrobial activity. The chain is Dermaseptin-5.1TR from Phyllomedusa trinitatis (Trinidad leaf frog).